The following is a 577-amino-acid chain: Proline--tRNA ligase (577 aa).

Belongs to the class-II aminoacyl-tRNA synthetase family. ProS type 1 subfamily. In terms of assembly, homodimer.

Its subcellular location is the cytoplasm. The catalysed reaction is tRNA(Pro) + L-proline + ATP = L-prolyl-tRNA(Pro) + AMP + diphosphate. Catalyzes the attachment of proline to tRNA(Pro) in a two-step reaction: proline is first activated by ATP to form Pro-AMP and then transferred to the acceptor end of tRNA(Pro). As ProRS can inadvertently accommodate and process non-cognate amino acids such as alanine and cysteine, to avoid such errors it has two additional distinct editing activities against alanine. One activity is designated as 'pretransfer' editing and involves the tRNA(Pro)-independent hydrolysis of activated Ala-AMP. The other activity is designated 'posttransfer' editing and involves deacylation of mischarged Ala-tRNA(Pro). The misacylated Cys-tRNA(Pro) is not edited by ProRS. This chain is Proline--tRNA ligase, found in Thermotoga sp. (strain RQ2).